Consider the following 224-residue polypeptide: UPF0173 metal-dependent hydrolase TON_1314 (224 aa).

The protein belongs to the UPF0173 family.

The chain is UPF0173 metal-dependent hydrolase TON_1314 from Thermococcus onnurineus (strain NA1).